Here is a 223-residue protein sequence, read N- to C-terminus: Probable transaldolase (223 aa).

Residue K83 is the Schiff-base intermediate with substrate of the active site.

Belongs to the transaldolase family. Type 3B subfamily.

It localises to the cytoplasm. It carries out the reaction D-sedoheptulose 7-phosphate + D-glyceraldehyde 3-phosphate = D-erythrose 4-phosphate + beta-D-fructose 6-phosphate. It functions in the pathway carbohydrate degradation; pentose phosphate pathway; D-glyceraldehyde 3-phosphate and beta-D-fructose 6-phosphate from D-ribose 5-phosphate and D-xylulose 5-phosphate (non-oxidative stage): step 2/3. Functionally, transaldolase is important for the balance of metabolites in the pentose-phosphate pathway. This is Probable transaldolase from Myxococcus xanthus (strain DK1622).